Reading from the N-terminus, the 136-residue chain is Small ribosomal subunit protein eS17B (136 aa).

This sequence belongs to the eukaryotic ribosomal protein eS17 family. As to quaternary structure, component of the small ribosomal subunit (SSU). Mature yeast ribosomes consist of a small (40S) and a large (60S) subunit. The 40S small subunit contains 1 molecule of ribosomal RNA (18S rRNA) and 33 different proteins (encoded by 57 genes). The large 60S subunit contains 3 rRNA molecules (25S, 5.8S and 5S rRNA) and 46 different proteins (encoded by 81 genes).

It is found in the cytoplasm. Component of the ribosome, a large ribonucleoprotein complex responsible for the synthesis of proteins in the cell. The small ribosomal subunit (SSU) binds messenger RNAs (mRNAs) and translates the encoded message by selecting cognate aminoacyl-transfer RNA (tRNA) molecules. The large subunit (LSU) contains the ribosomal catalytic site termed the peptidyl transferase center (PTC), which catalyzes the formation of peptide bonds, thereby polymerizing the amino acids delivered by tRNAs into a polypeptide chain. The nascent polypeptides leave the ribosome through a tunnel in the LSU and interact with protein factors that function in enzymatic processing, targeting, and the membrane insertion of nascent chains at the exit of the ribosomal tunnel. The protein is Small ribosomal subunit protein eS17B of Saccharomyces cerevisiae (strain ATCC 204508 / S288c) (Baker's yeast).